The primary structure comprises 210 residues: Protein-methionine-sulfoxide reductase heme-binding subunit MsrQ (210 aa).

Helical transmembrane passes span 15–35, 89–109, 122–142, and 160–180; these read DTLVYGLVWLACFAPLAWLAW, LFAFAYVALHLLAYVGIDLFF, PFITLGMLGFMLLIPLAVTST, and LVYLIVPLGVAHYYLLVKADH.

It belongs to the MsrQ family. As to quaternary structure, heterodimer of a catalytic subunit (MsrP) and a heme-binding subunit (MsrQ). It depends on FMN as a cofactor. Requires heme b as cofactor.

Its subcellular location is the cell inner membrane. Functionally, part of the MsrPQ system that repairs oxidized periplasmic proteins containing methionine sulfoxide residues (Met-O), using respiratory chain electrons. Thus protects these proteins from oxidative-stress damage caused by reactive species of oxygen and chlorine generated by the host defense mechanisms. MsrPQ is essential for the maintenance of envelope integrity under bleach stress, rescuing a wide series of structurally unrelated periplasmic proteins from methionine oxidation. MsrQ provides electrons for reduction to the reductase catalytic subunit MsrP, using the quinone pool of the respiratory chain. The sequence is that of Protein-methionine-sulfoxide reductase heme-binding subunit MsrQ from Caulobacter vibrioides (strain ATCC 19089 / CIP 103742 / CB 15) (Caulobacter crescentus).